A 370-amino-acid polypeptide reads, in one-letter code: tRNA-specific 2-thiouridylase MnmA (370 aa).

ATP contacts are provided by residues 14–21 (GMSGGVDS) and M40. Residues 100–102 (NPD) are interaction with target base in tRNA. C105 acts as the Nucleophile in catalysis. C105 and C205 are oxidised to a cystine. G129 is an ATP binding site. Residues 155–157 (KDQ) form an interaction with tRNA region. The active-site Cysteine persulfide intermediate is the C205. The tract at residues 321–322 (RY) is interaction with tRNA.

Belongs to the MnmA/TRMU family.

The protein resides in the cytoplasm. It carries out the reaction S-sulfanyl-L-cysteinyl-[protein] + uridine(34) in tRNA + AH2 + ATP = 2-thiouridine(34) in tRNA + L-cysteinyl-[protein] + A + AMP + diphosphate + H(+). Its function is as follows. Catalyzes the 2-thiolation of uridine at the wobble position (U34) of tRNA, leading to the formation of s(2)U34. The chain is tRNA-specific 2-thiouridylase MnmA from Bordetella avium (strain 197N).